Consider the following 279-residue polypeptide: Pantothenate synthetase (279 aa).

31-38 (MGALHEGH) serves as a coordination point for ATP. Catalysis depends on histidine 38, which acts as the Proton donor. Glutamine 62 contacts (R)-pantoate. A beta-alanine-binding site is contributed by glutamine 62. 148–151 (GEKD) lines the ATP pocket. Residue glutamine 154 coordinates (R)-pantoate. ATP is bound by residues valine 177 and 185–188 (LSSR).

The protein belongs to the pantothenate synthetase family. In terms of assembly, homodimer.

The protein localises to the cytoplasm. The enzyme catalyses (R)-pantoate + beta-alanine + ATP = (R)-pantothenate + AMP + diphosphate + H(+). Its pathway is cofactor biosynthesis; (R)-pantothenate biosynthesis; (R)-pantothenate from (R)-pantoate and beta-alanine: step 1/1. Catalyzes the condensation of pantoate with beta-alanine in an ATP-dependent reaction via a pantoyl-adenylate intermediate. This Cereibacter sphaeroides (strain ATCC 17023 / DSM 158 / JCM 6121 / CCUG 31486 / LMG 2827 / NBRC 12203 / NCIMB 8253 / ATH 2.4.1.) (Rhodobacter sphaeroides) protein is Pantothenate synthetase.